A 151-amino-acid polypeptide reads, in one-letter code: Cytochrome c-type biogenesis protein CcmE (151 aa).

Topologically, residues 1–8 (MNPQRKKR) are cytoplasmic. Residues 9-29 (LLLIVGLLVGVGVAVGFALSA) form a helical; Signal-anchor for type II membrane protein membrane-spanning segment. Residues 30 to 151 (LQQNINLFYT…QAAAGGETKP (122 aa)) are Periplasmic-facing. H124 and Y128 together coordinate heme.

This sequence belongs to the CcmE/CycJ family.

The protein resides in the cell inner membrane. Heme chaperone required for the biogenesis of c-type cytochromes. Transiently binds heme delivered by CcmC and transfers the heme to apo-cytochromes in a process facilitated by CcmF and CcmH. This is Cytochrome c-type biogenesis protein CcmE from Pseudomonas putida (strain ATCC 700007 / DSM 6899 / JCM 31910 / BCRC 17059 / LMG 24140 / F1).